A 276-amino-acid chain; its full sequence is Integrin-binding sialoprotein (276 aa).

Positions 1–16 (MRSALLLACLLATASA) are cleaved as a signal peptide. A disordered region spans residues 54 to 251 (HRYKGSDSSE…EEPARGDSYR (198 aa)). Positions 61–75 (SSEEEGDGSEEEEEG) are enriched in acidic residues. A compositionally biased stretch (basic and acidic residues) spans 106 to 119 (QDCKGGQKGTRGDS). Positions 116–118 (RGD) match the Cell attachment site motif. Residues 120–144 (GDEDSDEEEEEEEEEEEEEEVEEQD) are compositionally biased toward acidic residues. Residues 145–165 (VSVNGTSTNTTAETPHGNNTV) show a composition bias toward polar residues. N-linked (GlcNAc...) asparagine glycans are attached at residues asparagine 148, asparagine 153, and asparagine 162. A compositionally biased stretch (acidic residues) spans 167–188 (AEEEEDDDEEEEEEEEEEEEAE). A compositionally biased stretch (low complexity) spans 189-200 (ATTAAATTAQDE). The Cell attachment site signature appears at 228-230 (RGD). Residues 246–248 (RGD) carry the Integrin-binding motif motif. Sulfotyrosine occurs at positions 272 and 273.

In terms of assembly, monomer. Interacts with integrins; the interaction promotes cell adhesion. Post-translationally, phosphorylated on serine and threonine residues.

It localises to the secreted. In terms of biological role, binds tightly to hydroxyapatite. Appears to form an integral part of the mineralized matrix. Probably important to cell-matrix interaction. Promotes adhesion and migration of various cells via the alpha-V/beta-3 integrin receptor (ITGAV:ITGB3). This Gallus gallus (Chicken) protein is Integrin-binding sialoprotein (IBSP).